Consider the following 98-residue polypeptide: N(2)-fixation sustaining protein CowN (98 aa).

Belongs to the CowN family.

Its function is as follows. Is required to sustain N(2)-dependent growth in the presence of low levels of carbon monoxide (CO). Probably acts by protecting the N(2) fixation ability of the nitrogenase complex, which is inactivated in the presence of CO. This chain is N(2)-fixation sustaining protein CowN, found in Azospirillum sp. (strain B510).